The chain runs to 176 residues: Ribosome rescue factor SmrB (176 aa).

Residues 97–172 enclose the Smr domain; the sequence is LDMHGMTQQE…GDGALLVLLS (76 aa).

This sequence belongs to the SmrB family. Associates with collided ribosomes, but not with correctly translating polysomes.

In terms of biological role, acts as a ribosome collision sensor. Detects stalled/collided disomes (pairs of ribosomes where the leading ribosome is stalled and a second ribosome has collided with it) and endonucleolytically cleaves mRNA at the 5' boundary of the stalled ribosome. Stalled/collided disomes form a new interface (primarily via the 30S subunits) that binds SmrB. Cleaved mRNA becomes available for tmRNA ligation, leading to ribosomal subunit dissociation and rescue of stalled ribosomes. In Vibrio vulnificus (strain CMCP6), this protein is Ribosome rescue factor SmrB.